Reading from the N-terminus, the 38-residue chain is Photosystem II reaction center protein Y (38 aa).

The Lumenal portion of the chain corresponds to 1-4; it reads MSMR. A helical transmembrane segment spans residues 5–23; it reads LVVVLLPLGIALGWAVYNI. Over 24 to 38 the chain is Stromal; that stretch reads GKLAIEQWRRTGSKV.

It belongs to the PsbY family. In terms of assembly, PSII is composed of 1 copy each of membrane proteins PsbA, PsbB, PsbC, PsbD, PsbE, PsbF, PsbH, PsbI, PsbJ, PsbK, PsbL, PsbM, PsbT, PsbX, PsbY, PsbZ, Psb30/Ycf12, at least 3 peripheral proteins of the oxygen-evolving complex and a large number of cofactors. It forms dimeric complexes.

It is found in the plastid. The protein resides in the cyanelle thylakoid membrane. Its function is as follows. Loosely associated component of the core of photosystem II (PSII), it is not always seen in crystals. PSII is a light-driven water plastoquinone oxidoreductase, using light energy to abstract electrons from H(2)O, generating a proton gradient subsequently used for ATP formation. In Cyanophora paradoxa, this protein is Photosystem II reaction center protein Y.